A 746-amino-acid chain; its full sequence is Exostosin-1 (746 aa).

Topologically, residues 1–7 (MQAKKRY) are cytoplasmic. A helical; Signal-anchor for type II membrane protein membrane pass occupies residues 8–28 (FILLSAGSCLALLFYFGGLQF). Residues 29–746 (RASRSHSRRE…RKKYRDIERL (718 aa)) are Lumenal-facing. Asn-89 is a glycosylation site (N-linked (GlcNAc...) asparagine). Disulfide bonds link Cys-98-Cys-103 and Cys-109-Cys-152. Residues Leu-166 and Tyr-203 each contribute to the a protein site. Lys-267, Lys-269, Tyr-271, and Arg-280 together coordinate UDP. Cysteines 298 and 312 form a disulfide. Position 300 (His-300) interacts with a protein. Residues Tyr-319 and Tyr-324 each contribute to the UDP site. N-linked (GlcNAc...) asparagine glycosylation is present at Asn-330. 2 disulfide bridges follow: Cys-334–Cys-355 and Cys-652–Cys-704. UDP is bound by residues Arg-346 and Glu-349.

Belongs to the glycosyltransferase 47 family. Part of the heparan sulfate polymerase, a dimeric complex composed of EXT1 and EXT2. Could also form homooligomeric complexes. Interacts with NDST1. Post-translationally, N-glycosylated.

Its subcellular location is the golgi apparatus membrane. It is found in the golgi apparatus. The protein resides in the cis-Golgi network membrane. The protein localises to the endoplasmic reticulum membrane. It catalyses the reaction 3-O-{alpha-D-GlcNAc-[(1-&gt;4)-beta-D-GlcA-(1-&gt;4)-alpha-D-GlcNAc](n)-(1-&gt;4)-beta-D-GlcA-(1-&gt;3)-beta-D-Gal-(1-&gt;3)-beta-D-Gal-(1-&gt;4)-beta-D-Xyl}-L-seryl-[protein] + UDP-alpha-D-glucuronate = 3-O-{[(1-&gt;4)-beta-D-GlcA-(1-&gt;4)-alpha-D-GlcNAc](n+1)-(1-&gt;4)-beta-D-GlcA-(1-&gt;3)-beta-D-Gal-(1-&gt;3)-beta-D-Gal-(1-&gt;4)-beta-D-Xyl}-L-seryl-[protein] + UDP + H(+). It functions in the pathway protein modification; protein glycosylation. Its function is as follows. Glycosyltransferase forming with EXT2 the heterodimeric heparan sulfate polymerase which catalyzes the elongation of the heparan sulfate glycan backbone. Glycan backbone extension consists in the alternating transfer of (1-&gt;4)-beta-D-GlcA and (1-&gt;4)-alpha-D-GlcNAc residues from their respective UDP-sugar donors. Both EXT1 and EXT2 are required for the full activity of the polymerase since EXT1 bears the N-acetylglucosaminyl-proteoglycan 4-beta-glucuronosyltransferase activity within the complex while EXT2 carries the glucuronosyl-N-acetylglucosaminyl-proteoglycan 4-alpha-N-acetylglucosaminyltransferase activity. Heparan sulfate proteoglycans are ubiquitous components of the extracellular matrix and play an important role in tissue homeostasis and signaling. The protein is Exostosin-1 (EXT1) of Pongo abelii (Sumatran orangutan).